A 485-amino-acid chain; its full sequence is Glutamyl-tRNA(Gln) amidotransferase subunit A (485 aa).

Active-site charge relay system residues include lysine 79 and serine 154. Serine 178 acts as the Acyl-ester intermediate in catalysis.

The protein belongs to the amidase family. GatA subfamily. In terms of assembly, heterotrimer of A, B and C subunits.

It catalyses the reaction L-glutamyl-tRNA(Gln) + L-glutamine + ATP + H2O = L-glutaminyl-tRNA(Gln) + L-glutamate + ADP + phosphate + H(+). In terms of biological role, allows the formation of correctly charged Gln-tRNA(Gln) through the transamidation of misacylated Glu-tRNA(Gln) in organisms which lack glutaminyl-tRNA synthetase. The reaction takes place in the presence of glutamine and ATP through an activated gamma-phospho-Glu-tRNA(Gln). This Clostridium botulinum (strain Loch Maree / Type A3) protein is Glutamyl-tRNA(Gln) amidotransferase subunit A.